Here is a 467-residue protein sequence, read N- to C-terminus: Glutamate--tRNA ligase 2 (467 aa).

A 'HIGH' region motif is present at residues 18–28 (PSPTGYLHVGG). The 'KMSKS' region motif lies at 238–242 (PLSKR). Lysine 241 serves as a coordination point for ATP.

Belongs to the class-I aminoacyl-tRNA synthetase family. Glutamate--tRNA ligase type 1 subfamily. Monomer.

The protein resides in the cytoplasm. It catalyses the reaction tRNA(Glu) + L-glutamate + ATP = L-glutamyl-tRNA(Glu) + AMP + diphosphate. Catalyzes the attachment of glutamate to tRNA(Glu) in a two-step reaction: glutamate is first activated by ATP to form Glu-AMP and then transferred to the acceptor end of tRNA(Glu). This chain is Glutamate--tRNA ligase 2, found in Fervidobacterium nodosum (strain ATCC 35602 / DSM 5306 / Rt17-B1).